We begin with the raw amino-acid sequence, 227 residues long: Adenosylcobinamide-GDP ribazoletransferase (227 aa).

5 consecutive transmembrane segments (helical) span residues 3–23 (CLKA…ELDF), 26–46 (IWAT…AVYF), 95–115 (GVGG…ARPE), 117–137 (WLDY…VAAY), and 165–185 (AVAA…SLFF).

This sequence belongs to the CobS family. The cofactor is Mg(2+).

It is found in the cell membrane. The catalysed reaction is alpha-ribazole + adenosylcob(III)inamide-GDP = adenosylcob(III)alamin + GMP + H(+). The enzyme catalyses alpha-ribazole 5'-phosphate + adenosylcob(III)inamide-GDP = adenosylcob(III)alamin 5'-phosphate + GMP + H(+). It functions in the pathway cofactor biosynthesis; adenosylcobalamin biosynthesis; adenosylcobalamin from cob(II)yrinate a,c-diamide: step 7/7. Functionally, joins adenosylcobinamide-GDP and alpha-ribazole to generate adenosylcobalamin (Ado-cobalamin). Also synthesizes adenosylcobalamin 5'-phosphate from adenosylcobinamide-GDP and alpha-ribazole 5'-phosphate. This Pyrobaculum islandicum (strain DSM 4184 / JCM 9189 / GEO3) protein is Adenosylcobinamide-GDP ribazoletransferase.